Reading from the N-terminus, the 605-residue chain is MARISAHVIDAIADRVDLVSLVGNYTHLERRGDDWWGRCPFHHERTPSFHVVPDKKMYYCFGCGVGGSTIKFFMEIEKIDFHEAAVRLAKRAGIEMSFEDGVHAPSAHASFTMQLCEVYQRIAETFHHVLMHTAQGARARAYLASRKVTDDSIRTFKLGYAPPDPVWLFQFLRHKGYSPEFLARSGLFAKKSERIAVFSDRIMYPIADRYGQVIAFGARALGTAPAKYLNTADMPQYKKGEHLFAFHCALSQMRKTRAAIICEGYMDVIAFHQAQLTYAVAPLGALLTKSQARLMRSFVDRIYMCFDADGAGRAATYKAILLCRSLGFEVRIVELNGGTDPAECACIEGEDALRKSVERSTTDAQYLIRCARHEHSHLGADDTSRAVSFLFPYLSVLDSAIQREQVMQDIAMAFGIRIQAVHADYLRYVSRTTQKGTTGNCVLSVQGTAIQVKEPATGVRTAQLRLVLAVVANPELFELLRESVCADDFEDPMAKELFIILEECYRADTRASPHVLSCCTTDELRKLVSEAIVCGEFSCNAPQIVRDGVALVRRNRLLKERESLVGRLRRFGDASSGEECGSMQELMMEKQRVDEELERLKGVRK.

The CHC2-type zinc finger occupies 39–63; that stretch reads CPFHHERTPSFHVVPDKKMYYCFGC. Residues 257–338 enclose the Toprim domain; that stretch reads RAAIICEGYM…EVRIVELNGG (82 aa). Residues Glu-263, Asp-307, and Asp-309 each contribute to the Mg(2+) site.

This sequence belongs to the DnaG primase family. In terms of assembly, monomer. Interacts with DnaB. Zn(2+) is required as a cofactor. The cofactor is Mg(2+).

It carries out the reaction ssDNA + n NTP = ssDNA/pppN(pN)n-1 hybrid + (n-1) diphosphate.. RNA polymerase that catalyzes the synthesis of short RNA molecules used as primers for DNA polymerase during DNA replication. In Treponema pallidum (strain Nichols), this protein is DNA primase.